The chain runs to 125 residues: Holo-[acyl-carrier-protein] synthase (125 aa).

Mg(2+) contacts are provided by Asp-8 and Glu-57.

This sequence belongs to the P-Pant transferase superfamily. AcpS family. It depends on Mg(2+) as a cofactor.

The protein localises to the cytoplasm. It catalyses the reaction apo-[ACP] + CoA = holo-[ACP] + adenosine 3',5'-bisphosphate + H(+). Transfers the 4'-phosphopantetheine moiety from coenzyme A to a Ser of acyl-carrier-protein. The polypeptide is Holo-[acyl-carrier-protein] synthase (Koribacter versatilis (strain Ellin345)).